We begin with the raw amino-acid sequence, 189 residues long: MVPVLLLLPALAGLFGAAEGQAFHLGKCPHPPVQENFDVNKYLGKWYEIEKIPVSFEKGSCIQANYSLKENGNVEVINKELRADGTVNQIEGEATPENITEPAKLAVKFFWFMPSAPYWVLATDYENYALVYSCTTIIWLFHMDHVWILGRNPYLPPETVTYLKDILTSNNIEVEKMTITDQVNCPESM.

Residues 1–20 (MVPVLLLLPALAGLFGAAEG) form the signal peptide. Pyrrolidone carboxylic acid is present on Gln21. Intrachain disulfides connect Cys28/Cys134 and Cys61/Cys185. N-linked (GlcNAc...) asparagine glycans are attached at residues Asn65 and Asn98.

Belongs to the calycin superfamily. Lipocalin family. Homodimer.

The protein localises to the secreted. Functionally, APOD occurs in the macromolecular complex with lecithin-transport and binding of bilin. Appears to be able to transport a variety of ligands in a number of different contexts. In Bos taurus (Bovine), this protein is Apolipoprotein D (APOD).